A 987-amino-acid polypeptide reads, in one-letter code: Kinesin-like protein KIN-14G (987 aa).

The region spanning 44 to 163 is the Calponin-homology (CH) domain; sequence SLRRYEAAGW…CILALKSYSE (120 aa). Residues 201–221 are disordered; the sequence is ISRTQSTDMLSTDQPLSSDGD. The Kinesin motor domain occupies 394–721; the sequence is NIRVYCRVRP…LKFAERVGSV (328 aa). An ATP-binding site is contributed by 478-485; sequence GQTGSGKT. A coiled-coil region spans residues 725–754; the sequence is AARVNKDNSEVKELKEQIANLKMALVRKGN. Disordered stretches follow at residues 759–849 and 927–987; these read QPTA…ESKS and NIQN…SLGT. A compositionally biased stretch (polar residues) spans 788-797; it reads MGNTSNNSRP. Residues 840–849 show a composition bias toward basic and acidic residues; the sequence is GKDEDRESKS. The span at 964–974 shows a compositional bias: polar residues; the sequence is PPNTVNSQPQR.

This sequence belongs to the TRAFAC class myosin-kinesin ATPase superfamily. Kinesin family. KIN-14 subfamily. Monomer. In terms of tissue distribution, flower specific.

Its subcellular location is the cytoplasm. The protein localises to the cytoskeleton. Functionally, microtubule-binding motor protein. The polypeptide is Kinesin-like protein KIN-14G (Arabidopsis thaliana (Mouse-ear cress)).